The sequence spans 454 residues: Arginine biosynthesis bifunctional protein ArgJ, mitochondrial (454 aa).

The substrate site is built by threonine 184, lysine 213, threonine 224, glutamate 311, asparagine 449, and threonine 454. The active-site Nucleophile is the threonine 224.

It belongs to the ArgJ family. In terms of assembly, heterodimer of an alpha and a beta chain. In terms of processing, the alpha and beta chains are autoproteolytically processed from a single precursor protein within the mitochondrion.

It is found in the mitochondrion matrix. The enzyme catalyses N(2)-acetyl-L-ornithine + L-glutamate = N-acetyl-L-glutamate + L-ornithine. It catalyses the reaction L-glutamate + acetyl-CoA = N-acetyl-L-glutamate + CoA + H(+). Its pathway is amino-acid biosynthesis; L-arginine biosynthesis; L-ornithine and N-acetyl-L-glutamate from L-glutamate and N(2)-acetyl-L-ornithine (cyclic): step 1/1. It functions in the pathway amino-acid biosynthesis; L-arginine biosynthesis; N(2)-acetyl-L-ornithine from L-glutamate: step 1/4. Catalyzes two activities which are involved in the cyclic version of arginine biosynthesis: the synthesis of acetylglutamate from glutamate and acetyl-CoA, and of ornithine by transacetylation between acetylornithine and glutamate. This chain is Arginine biosynthesis bifunctional protein ArgJ, mitochondrial, found in Aspergillus clavatus (strain ATCC 1007 / CBS 513.65 / DSM 816 / NCTC 3887 / NRRL 1 / QM 1276 / 107).